A 176-amino-acid polypeptide reads, in one-letter code: Inorganic pyrophosphatase (176 aa).

Residues lysine 30, arginine 44, and tyrosine 56 each contribute to the substrate site. Positions 66, 71, and 103 each coordinate Mg(2+). Substrate is bound at residue tyrosine 142.

The protein belongs to the PPase family. In terms of assembly, homohexamer. Requires Mg(2+) as cofactor.

The protein localises to the cytoplasm. It carries out the reaction diphosphate + H2O = 2 phosphate + H(+). In terms of biological role, catalyzes the hydrolysis of inorganic pyrophosphate (PPi) forming two phosphate ions. The sequence is that of Inorganic pyrophosphatase from Vibrio vulnificus (strain CMCP6).